The chain runs to 1058 residues: Carbamoyl phosphate synthase large chain (1058 aa).

Positions 1–401 (MAKRTDIKKI…CLLKACRSLE (401 aa)) are carboxyphosphate synthetic domain. 12 residues coordinate ATP: Arg-129, Arg-169, Gly-175, Gly-176, Arg-208, Ile-210, Glu-215, Gly-241, Ile-242, His-243, Gln-284, and Glu-298. Positions 133–327 (KQLMKELGEP…IAKIAAKIAV (195 aa)) constitute an ATP-grasp 1 domain. Mg(2+) is bound by residues Gln-284, Glu-298, and Asn-300. 3 residues coordinate Mn(2+): Gln-284, Glu-298, and Asn-300. The interval 402-546 (IGVDHNELKG…YSTYEWENES (145 aa)) is oligomerization domain. A carbamoyl phosphate synthetic domain region spans residues 547-929 (IKSEKESVIV…ALYKAFEASY (383 aa)). Residues 671–861 (EKALKDLGIP…MAQVATKLIL (191 aa)) form the ATP-grasp 2 domain. Residues Arg-707, Ser-746, Ile-748, Glu-752, Gly-777, Val-778, His-779, Ser-780, Gln-820, and Glu-832 each contribute to the ATP site. Mg(2+) is bound by residues Gln-820, Glu-832, and Asn-834. Mn(2+)-binding residues include Gln-820, Glu-832, and Asn-834. The MGS-like domain occupies 930–1058 (LHMPEYGTIV…ESRTFSIEAI (129 aa)). An allosteric domain region spans residues 930–1058 (LHMPEYGTIV…ESRTFSIEAI (129 aa)).

The protein belongs to the CarB family. Composed of two chains; the small (or glutamine) chain promotes the hydrolysis of glutamine to ammonia, which is used by the large (or ammonia) chain to synthesize carbamoyl phosphate. Tetramer of heterodimers (alpha,beta)4. Requires Mg(2+) as cofactor. Mn(2+) is required as a cofactor.

It catalyses the reaction hydrogencarbonate + L-glutamine + 2 ATP + H2O = carbamoyl phosphate + L-glutamate + 2 ADP + phosphate + 2 H(+). The catalysed reaction is hydrogencarbonate + NH4(+) + 2 ATP = carbamoyl phosphate + 2 ADP + phosphate + 2 H(+). It participates in amino-acid biosynthesis; L-arginine biosynthesis; carbamoyl phosphate from bicarbonate: step 1/1. Its pathway is pyrimidine metabolism; UMP biosynthesis via de novo pathway; (S)-dihydroorotate from bicarbonate: step 1/3. Large subunit of the glutamine-dependent carbamoyl phosphate synthetase (CPSase). CPSase catalyzes the formation of carbamoyl phosphate from the ammonia moiety of glutamine, carbonate, and phosphate donated by ATP, constituting the first step of 2 biosynthetic pathways, one leading to arginine and/or urea and the other to pyrimidine nucleotides. The large subunit (synthetase) binds the substrates ammonia (free or transferred from glutamine from the small subunit), hydrogencarbonate and ATP and carries out an ATP-coupled ligase reaction, activating hydrogencarbonate by forming carboxy phosphate which reacts with ammonia to form carbamoyl phosphate. The chain is Carbamoyl phosphate synthase large chain from Streptococcus equi subsp. zooepidemicus (strain H70).